A 519-amino-acid chain; its full sequence is MLTRFRSAVLRGAVSITGARAASTAPVADHKGRVGHVSQVIGAVVDVHFADGVPPVLTALDVVDKLGRDEPLTLEIVQHLDAHTGRCIAMQTTDLLKLKAKVVSTGGNISVPVGRETLGRIFNVLGDAIDQRGPVGEKLRMPIHAVAPKLADQAAEDAVLTTGIKVIDLILPYCKGGKIGLFGGAGVGKTVIIMELINNVAKGHGGFSVFAGVGERTREGTDLYLEMMQSKVIDLKGESKCVLVYGQMNEPPGARARVAQSALTMAEYFRDVEGQDVLLFIDNIFRFTQANSEVSALLGRIPAAVGYQPTLAEDLGQLQERITSTTKGSITSVQAVYVPADDITDPAPATTFSHLDATTVLDRAVAESGIYPAVNPLECASRIMDPDVISVDHYNVAQDVVQMLTKYRELQDIIAVLGIDELSEEDKLIVDRARKLVKFLSQPFQVAEVFTGMTGHYVQLDDTIDSFSGLLMGTYDQVPEMAFYMVGGINSVLEKAKKMAEEAAELEKMRRARVAQASS.

Residues 1–21 (MLTRFRSAVLRGAVSITGARA) constitute a mitochondrion transit peptide. ATP-binding positions include 184–191 (GAGVGKTV) and Arg-216.

It belongs to the ATPase alpha/beta chains family. F-type ATPases have 2 components, F(1) - the catalytic core - and F(o) - the membrane proton channel. F(1) has five subunits: alpha(3), beta(3), gamma(1), delta(1), epsilon(1), plus the additional subunit P18 (Tb427.05.1710) that is not present in F(1)F(o) ATP synthase from metazoa. Subunit P18 (Tb927.5.1710) interacts with the alpha subunit with a 1:1 stoichiometry; the interaction is direct. Subunit gamma is part of the central stalk. F(o) has three main subunits: a, b and c. The trypanosomal ATPase complex contains additional subunits that are not present in the F(1)F(o) ATP synthase from metazoa.

It localises to the mitochondrion. The protein localises to the mitochondrion inner membrane. It catalyses the reaction ATP + H2O + 4 H(+)(in) = ADP + phosphate + 5 H(+)(out). Its function is as follows. Mitochondrial membrane ATP synthase (F(1)F(o) ATP synthase) produces ATP from ADP in the presence of a proton gradient across the membrane which is generated by electron transport complexes of the respiratory chain. F-type ATPases consist of two structural domains, F(1) - containing the extramembraneous catalytic core, and F(o) - containing the membrane proton channel, linked together by a central stalk and a peripheral stalk. During catalysis, ATP synthesis in the catalytic domain of F(1) is coupled via a rotary mechanism of the central stalk subunits to proton translocation. Subunits alpha and beta form the catalytic core in F(1). Rotation of the central stalk against the surrounding alpha(3)beta(3) subunits leads to hydrolysis of ATP in three separate catalytic sites on the beta subunits. Contrary to the procyclic, insect form that requires F(1)F(o) ATP synthase for ATP synthesis, the bloodstream form relies on ATP hydrolysis by F(1)F(o) ATP synthase to maintain its mitochondrial membrane potential. This is ATP synthase subunit beta, mitochondrial from Trypanosoma brucei brucei.